A 341-amino-acid chain; its full sequence is S-adenosylmethionine:tRNA ribosyltransferase-isomerase (341 aa).

It belongs to the QueA family. As to quaternary structure, monomer.

It is found in the cytoplasm. The catalysed reaction is 7-aminomethyl-7-carbaguanosine(34) in tRNA + S-adenosyl-L-methionine = epoxyqueuosine(34) in tRNA + adenine + L-methionine + 2 H(+). It participates in tRNA modification; tRNA-queuosine biosynthesis. Transfers and isomerizes the ribose moiety from AdoMet to the 7-aminomethyl group of 7-deazaguanine (preQ1-tRNA) to give epoxyqueuosine (oQ-tRNA). The chain is S-adenosylmethionine:tRNA ribosyltransferase-isomerase from Clostridium botulinum (strain ATCC 19397 / Type A).